The following is a 257-amino-acid chain: Tryptophan synthase alpha chain (257 aa).

Active-site proton acceptor residues include glutamate 47 and aspartate 58.

The protein belongs to the TrpA family. In terms of assembly, tetramer of two alpha and two beta chains.

It catalyses the reaction (1S,2R)-1-C-(indol-3-yl)glycerol 3-phosphate + L-serine = D-glyceraldehyde 3-phosphate + L-tryptophan + H2O. It participates in amino-acid biosynthesis; L-tryptophan biosynthesis; L-tryptophan from chorismate: step 5/5. Functionally, the alpha subunit is responsible for the aldol cleavage of indoleglycerol phosphate to indole and glyceraldehyde 3-phosphate. The sequence is that of Tryptophan synthase alpha chain from Listeria welshimeri serovar 6b (strain ATCC 35897 / DSM 20650 / CCUG 15529 / CIP 8149 / NCTC 11857 / SLCC 5334 / V8).